The chain runs to 373 residues: Centrosomal protein of 41 kDa (373 aa).

A disordered region spans residues 89 to 127 (QRLEDNDSATSEPDAEITAKTNGNGSPGEQSPSPVQFIN). 2 positions are modified to phosphoserine: Ser-96 and Ser-99. The segment covering 107 to 127 (AKTNGNGSPGEQSPSPVQFIN) has biased composition (polar residues). Residue Thr-109 is modified to Phosphothreonine. 2 positions are modified to phosphoserine: Ser-114 and Ser-121. The 98-residue stretch at 169 to 266 (PDCPFLLLDV…LAQKFPEGLI (98 aa)) folds into the Rhodanese domain. Disordered stretches follow at residues 275-300 (QQAL…ENKW) and 315-373 (EEDQ…KPWK). Position 343 is an omega-N-methylarginine (Arg-343).

It belongs to the CEP41 family. As to quaternary structure, found in a complex with TTLL6.

It localises to the cytoplasm. Its subcellular location is the cytoskeleton. The protein resides in the microtubule organizing center. The protein localises to the centrosome. It is found in the cell projection. It localises to the cilium. Its subcellular location is the cilium basal body. In terms of biological role, required during ciliogenesis for tubulin glutamylation in cilium. Probably acts by participating in the transport of TTLL6, a tubulin polyglutamylase, between the basal body and the cilium. This chain is Centrosomal protein of 41 kDa (CEP41), found in Bos taurus (Bovine).